We begin with the raw amino-acid sequence, 343 residues long: Uroporphyrinogen decarboxylase (343 aa).

Substrate contacts are provided by residues Arg25–Arg29, Phe44, Asp75, Tyr150, Ser205, and His320.

The protein belongs to the uroporphyrinogen decarboxylase family. As to quaternary structure, homodimer.

It is found in the cytoplasm. It catalyses the reaction uroporphyrinogen III + 4 H(+) = coproporphyrinogen III + 4 CO2. It functions in the pathway porphyrin-containing compound metabolism; protoporphyrin-IX biosynthesis; coproporphyrinogen-III from 5-aminolevulinate: step 4/4. Functionally, catalyzes the decarboxylation of four acetate groups of uroporphyrinogen-III to yield coproporphyrinogen-III. This Mesorhizobium japonicum (strain LMG 29417 / CECT 9101 / MAFF 303099) (Mesorhizobium loti (strain MAFF 303099)) protein is Uroporphyrinogen decarboxylase.